We begin with the raw amino-acid sequence, 1006 residues long: Serine/threonine-protein phosphatase BSL3 (1006 aa).

The interval 1–67 is disordered; the sequence is MDLDSSMVPE…QQQQQPQVTA (67 aa). 2 stretches are compositionally biased toward low complexity: residues 38 to 47 and 54 to 67; these read SESESASLTP and QQQQ…QVTA. 5 Kelch repeats span residues 138–184, 242–290, 295–345, 351–398, and 419–465; these read TSAG…VATA, YLMA…TASA, LLLL…VFVN, SGGA…DAAG, and LIFI…TPPG. 2 disordered regions span residues 454–494 and 552–579; these read AAAA…LGSP and GEVE…IKPD. Ser-616 bears the Phosphoserine mark. 4 residues coordinate Mn(2+): Asp-709, His-711, Asp-743, and Asn-775. His-776 acts as the Proton donor in catalysis. Mn(2+) is bound by residues His-828 and His-907. Phosphoserine is present on Ser-964. Residues 982 to 1006 form a disordered region; sequence NVNRPPTPTRGRPQNPNDRGSLAWI.

It belongs to the PPP phosphatase family. BSU subfamily. It depends on Mn(2+) as a cofactor. In terms of tissue distribution, expressed throughout the plant, with a higher level in younger parts.

Its subcellular location is the nucleus. The catalysed reaction is O-phospho-L-seryl-[protein] + H2O = L-seryl-[protein] + phosphate. It catalyses the reaction O-phospho-L-threonyl-[protein] + H2O = L-threonyl-[protein] + phosphate. Its function is as follows. Phosphatase involved in elongation process, probably by acting as a regulator of brassinolide signaling. This Arabidopsis thaliana (Mouse-ear cress) protein is Serine/threonine-protein phosphatase BSL3 (BSL3).